Here is a 462-residue protein sequence, read N- to C-terminus: MFASIKDILENPILNSNVTINGWIRTKRSNGKIGFIEINDGSTLKGIQAVINEEENQFDEKDLKNLTTGASISLTGLLVESPAKGQNYEIKTCGFNVIGEADPKTYPLQKKRHTFEFLREIPHLRIRTNTFGAVARVRSKISYKIHEYFQKNGFFYINTPIITSNDGEGAGEMFRVSTLKFNKPNNDLGNIDFKDDFFGKEAFLSVTGQLHGEAYAMALSKIYTFGPTFRAENSNTTRHASEFWMIEPEMAFYKLNDNITLAEDLLKYLLSSILNECSQDMDFLENYIEKGLIKKLENVINSNFEVITYTKAIEILESSKKNFEIKPYWGIDLQTEHERFLTEETFKKPVVVIDYPKNFKAFYMKINKDNKTVKGMDVLVPKIGEIIGGSEREDNLQKLENRIKELNLSIEHLNWYLDLRRFGSTPHSGFGLGLERFVQYSTGISNIRDSIPFPRTPKNLYF.

Belongs to the class-II aminoacyl-tRNA synthetase family. In terms of assembly, homodimer.

It localises to the cytoplasm. It catalyses the reaction tRNA(Asn) + L-asparagine + ATP = L-asparaginyl-tRNA(Asn) + AMP + diphosphate + H(+). The sequence is that of Asparagine--tRNA ligase from Borreliella afzelii (strain PKo) (Borrelia afzelii).